The following is a 293-amino-acid chain: 4-hydroxy-3-methylbut-2-enyl diphosphate reductase (293 aa).

Cysteine 12 is a binding site for [4Fe-4S] cluster. (2E)-4-hydroxy-3-methylbut-2-enyl diphosphate is bound by residues histidine 40 and histidine 74. Residues histidine 40 and histidine 74 each coordinate dimethylallyl diphosphate. Residues histidine 40 and histidine 74 each coordinate isopentenyl diphosphate. Residue cysteine 96 participates in [4Fe-4S] cluster binding. Histidine 128 is a (2E)-4-hydroxy-3-methylbut-2-enyl diphosphate binding site. Histidine 128 provides a ligand contact to dimethylallyl diphosphate. Histidine 128 lines the isopentenyl diphosphate pocket. Catalysis depends on glutamate 130, which acts as the Proton donor. Threonine 166 is a binding site for (2E)-4-hydroxy-3-methylbut-2-enyl diphosphate. Cysteine 202 contributes to the [4Fe-4S] cluster binding site. (2E)-4-hydroxy-3-methylbut-2-enyl diphosphate-binding residues include serine 230, serine 231, asparagine 232, and serine 274. Dimethylallyl diphosphate is bound by residues serine 230, serine 231, asparagine 232, and serine 274. Residues serine 230, serine 231, asparagine 232, and serine 274 each coordinate isopentenyl diphosphate.

Belongs to the IspH family. [4Fe-4S] cluster serves as cofactor.

It catalyses the reaction isopentenyl diphosphate + 2 oxidized [2Fe-2S]-[ferredoxin] + H2O = (2E)-4-hydroxy-3-methylbut-2-enyl diphosphate + 2 reduced [2Fe-2S]-[ferredoxin] + 2 H(+). The enzyme catalyses dimethylallyl diphosphate + 2 oxidized [2Fe-2S]-[ferredoxin] + H2O = (2E)-4-hydroxy-3-methylbut-2-enyl diphosphate + 2 reduced [2Fe-2S]-[ferredoxin] + 2 H(+). It functions in the pathway isoprenoid biosynthesis; dimethylallyl diphosphate biosynthesis; dimethylallyl diphosphate from (2E)-4-hydroxy-3-methylbutenyl diphosphate: step 1/1. It participates in isoprenoid biosynthesis; isopentenyl diphosphate biosynthesis via DXP pathway; isopentenyl diphosphate from 1-deoxy-D-xylulose 5-phosphate: step 6/6. Functionally, catalyzes the conversion of 1-hydroxy-2-methyl-2-(E)-butenyl 4-diphosphate (HMBPP) into a mixture of isopentenyl diphosphate (IPP) and dimethylallyl diphosphate (DMAPP). Acts in the terminal step of the DOXP/MEP pathway for isoprenoid precursor biosynthesis. In Cytophaga hutchinsonii (strain ATCC 33406 / DSM 1761 / CIP 103989 / NBRC 15051 / NCIMB 9469 / D465), this protein is 4-hydroxy-3-methylbut-2-enyl diphosphate reductase.